The primary structure comprises 246 residues: Probable transcriptional regulatory protein GWCH70_2524 (246 aa).

Belongs to the TACO1 family.

The protein localises to the cytoplasm. This Geobacillus sp. (strain WCH70) protein is Probable transcriptional regulatory protein GWCH70_2524.